Reading from the N-terminus, the 723-residue chain is PX domain-containing protein EREL1 (723 aa).

Residues M1–H12 are compositionally biased toward basic residues. Residues M1–P26 are disordered. One can recognise a PX domain in the interval Y48 to R165. Disordered stretches follow at residues Q169–P193 and Y209–I230. The segment covering D172–P193 has biased composition (low complexity). The segment covering Y209–V225 has biased composition (polar residues). 2 coiled-coil regions span residues N401–K474 and K503–E555. The interval D698–R723 is disordered. Residues D704–D714 are compositionally biased toward acidic residues.

It localises to the cytoplasm. The protein resides in the cytosol. The protein localises to the endosome membrane. Acts as an effector of RABF2A and RABF2B. Involved in vacuolar transport of storage proteins. Regulates membrane trafficking to protein storage vacuoles (PSVs). Binds specifically to phosphatidylinositol 3-monophosphate (PtdIns3P). This Arabidopsis thaliana (Mouse-ear cress) protein is PX domain-containing protein EREL1.